The sequence spans 191 residues: Adenylate kinase (191 aa).

12-17 (GSGKTT) serves as a coordination point for ATP. Residues 34-63 (STGDLLRAESAKKTERGLLIEKFTSQGELV) are NMP. AMP contacts are provided by residues threonine 35, arginine 40, 61–63 (ELV), 88–91 (GYPR), and glutamine 95. Positions 130–136 (GRSRGAD) are LID. ATP is bound at residue arginine 131. Arginine 133 and arginine 145 together coordinate AMP. Position 173 (arginine 173) interacts with ATP.

This sequence belongs to the adenylate kinase family. Monomer.

The protein localises to the cytoplasm. It carries out the reaction AMP + ATP = 2 ADP. The protein operates within purine metabolism; AMP biosynthesis via salvage pathway; AMP from ADP: step 1/1. Functionally, catalyzes the reversible transfer of the terminal phosphate group between ATP and AMP. Plays an important role in cellular energy homeostasis and in adenine nucleotide metabolism. The polypeptide is Adenylate kinase (Helicobacter pylori (strain ATCC 700392 / 26695) (Campylobacter pylori)).